The sequence spans 202 residues: Casparian strip membrane protein 4 (202 aa).

At 1–40 (MKSDSIAVDVPAESSSAIKGKAPLLGLARDHTGSGGYKRG) the chain is on the cytoplasmic side. The helical transmembrane segment at 41 to 61 (LSIFDFLLRLAAIVAALAAAA) threads the bilayer. The Extracellular segment spans residues 62 to 90 (TMGTSDETLPFFTQFLQFEASYDDLPTFQ). The chain crosses the membrane as a helical span at residues 91 to 111 (FFVVAIAIVTGYLVLSLPFSV). Residues 112-130 (VTIVRPLAVAPRLLLLVLD) are Cytoplasmic-facing. A helical transmembrane segment spans residues 131-151 (TAALALDTAAASAAAAIVYLA). The Extracellular segment spans residues 152–176 (HNGNTNTNWLPICQQFGDFCQKTSG). The chain crosses the membrane as a helical span at residues 177–197 (AVVSAFASVTFLAILVVISGV). The Cytoplasmic segment spans residues 198 to 202 (SLKRP).

It belongs to the Casparian strip membrane proteins (CASP) family. As to quaternary structure, homodimer and heterodimers.

The protein localises to the cell membrane. Functionally, regulates membrane-cell wall junctions and localized cell wall deposition. Required for establishment of the Casparian strip membrane domain (CSD) and the subsequent formation of Casparian strips, a cell wall modification of the root endodermis that determines an apoplastic barrier between the intraorganismal apoplasm and the extraorganismal apoplasm and prevents lateral diffusion. This is Casparian strip membrane protein 4 from Arabidopsis lyrata subsp. lyrata (Lyre-leaved rock-cress).